We begin with the raw amino-acid sequence, 133 residues long: ATP synthase epsilon chain, chloroplastic (133 aa).

This sequence belongs to the ATPase epsilon chain family. In terms of assembly, F-type ATPases have 2 components, CF(1) - the catalytic core - and CF(0) - the membrane proton channel. CF(1) has five subunits: alpha(3), beta(3), gamma(1), delta(1), epsilon(1). CF(0) has three main subunits: a, b and c.

It localises to the plastid. Its subcellular location is the chloroplast thylakoid membrane. Its function is as follows. Produces ATP from ADP in the presence of a proton gradient across the membrane. In Psilotum nudum (Whisk fern), this protein is ATP synthase epsilon chain, chloroplastic.